The sequence spans 269 residues: Shikimate dehydrogenase (NADP(+)) (269 aa).

Shikimate is bound by residues 19–21 (SLS) and T66. K70 acts as the Proton acceptor in catalysis. D82 contributes to the NADP(+) binding site. 2 residues coordinate shikimate: N91 and D106. NADP(+) is bound by residues 130 to 134 (GAGGA), 153 to 158 (NRTKEK), and I214. Y216 serves as a coordination point for shikimate. Position 235 (G235) interacts with NADP(+). Residue Q242 participates in shikimate binding.

It belongs to the shikimate dehydrogenase family. As to quaternary structure, homodimer.

It catalyses the reaction shikimate + NADP(+) = 3-dehydroshikimate + NADPH + H(+). It functions in the pathway metabolic intermediate biosynthesis; chorismate biosynthesis; chorismate from D-erythrose 4-phosphate and phosphoenolpyruvate: step 4/7. In terms of biological role, involved in the biosynthesis of the chorismate, which leads to the biosynthesis of aromatic amino acids. Catalyzes the reversible NADPH linked reduction of 3-dehydroshikimate (DHSA) to yield shikimate (SA). The protein is Shikimate dehydrogenase (NADP(+)) of Aquifex aeolicus (strain VF5).